Consider the following 171-residue polypeptide: Calcium-binding allergen Ole e 8 (171 aa).

EF-hand domains are found at residues 16 to 51 (QEPN…LGSN), 52 to 87 (TSKE…ETDP), 92 to 127 (GGEN…LGER), and 128 to 163 (YAEH…KSGN). Residues aspartate 29, asparagine 31, aspartate 33, lysine 35, glutamate 40, aspartate 65, aspartate 67, aspartate 69, glutamate 76, aspartate 105, aspartate 107, asparagine 109, glutamate 116, aspartate 141, aspartate 143, aspartate 145, tyrosine 147, and glutamate 152 each contribute to the Ca(2+) site.

As to quaternary structure, homodimer. In terms of tissue distribution, expressed in pollen.

The sequence is that of Calcium-binding allergen Ole e 8 from Olea europaea (Common olive).